We begin with the raw amino-acid sequence, 192 residues long: 21.7 kDa class VI heat shock protein (192 aa).

The sHSP domain occupies 80-192 (SLRSLGQCRV…IPKINSKNKF (113 aa)).

It belongs to the small heat shock protein (HSP20) family. In terms of assembly, may form oligomeric structures.

The protein localises to the cytoplasm. The polypeptide is 21.7 kDa class VI heat shock protein (HSP21.7) (Arabidopsis thaliana (Mouse-ear cress)).